The sequence spans 92 residues: Small ribosomal subunit protein bS18 (92 aa).

This sequence belongs to the bacterial ribosomal protein bS18 family. In terms of assembly, part of the 30S ribosomal subunit. Forms a tight heterodimer with protein bS6.

Functionally, binds as a heterodimer with protein bS6 to the central domain of the 16S rRNA, where it helps stabilize the platform of the 30S subunit. The sequence is that of Small ribosomal subunit protein bS18 from Chlorobium chlorochromatii (strain CaD3).